The primary structure comprises 33 residues: Protein YdgV (33 aa).

This chain is Protein YdgV, found in Escherichia coli (strain K12).